Here is a 240-residue protein sequence, read N- to C-terminus: ATP-dependent dethiobiotin synthetase BioD (240 aa).

ATP is bound at residue 15–20 (EIGKTF). Residue Thr19 coordinates Mg(2+). Lys40 is a catalytic residue. Residues Asp57, 118–121 (EGVG), and 178–179 (NR) each bind ATP. Asp57 and Glu118 together coordinate Mg(2+).

It belongs to the dethiobiotin synthetase family. In terms of assembly, homodimer. Mg(2+) serves as cofactor.

The protein localises to the cytoplasm. It carries out the reaction (7R,8S)-7,8-diammoniononanoate + CO2 + ATP = (4R,5S)-dethiobiotin + ADP + phosphate + 3 H(+). It participates in cofactor biosynthesis; biotin biosynthesis; biotin from 7,8-diaminononanoate: step 1/2. Its function is as follows. Catalyzes a mechanistically unusual reaction, the ATP-dependent insertion of CO2 between the N7 and N8 nitrogen atoms of 7,8-diaminopelargonic acid (DAPA, also called 7,8-diammoniononanoate) to form a ureido ring. This Burkholderia pseudomallei (strain K96243) protein is ATP-dependent dethiobiotin synthetase BioD.